A 507-amino-acid chain; its full sequence is Xylose import ATP-binding protein XylG (507 aa).

ABC transporter domains are found at residues L5–E242 and L259–K504. Residue G37 to S44 coordinates ATP.

It belongs to the ABC transporter superfamily. Xylose importer (TC 3.A.1.2.4) family. As to quaternary structure, the complex is composed of two ATP-binding proteins (XylG), two transmembrane proteins (XylH) and a solute-binding protein (XylF).

The protein localises to the cell inner membrane. The catalysed reaction is D-xylose(out) + ATP + H2O = D-xylose(in) + ADP + phosphate + H(+). Functionally, part of the ABC transporter complex XylFGH involved in xylose import. Responsible for energy coupling to the transport system. This chain is Xylose import ATP-binding protein XylG, found in Photobacterium profundum (strain SS9).